Here is a 95-residue protein sequence, read N- to C-terminus: Small ribosomal subunit protein bS6 (95 aa).

This sequence belongs to the bacterial ribosomal protein bS6 family.

Functionally, binds together with bS18 to 16S ribosomal RNA. The chain is Small ribosomal subunit protein bS6 from Geobacillus kaustophilus (strain HTA426).